A 321-amino-acid polypeptide reads, in one-letter code: Agamous-like MADS-box protein AGL80 (321 aa).

Positions 1 to 61 (MTRKKVKLAY…DTNPEVWPSN (61 aa)) constitute an MADS-box domain. Positions 89–114 (FLKQRIAKATETLRRQRKDSRELEMT) form a coiled coil.

As to quaternary structure, interacts with AGL61 and AGL62. Forms a heterodimer with AGL61. Interacts with MEE14/CBP1. As to expression, expressed in the central cell of the female gametophyte and in early endosperm. Also detected in ovaries, young siliques, roots, leaves, stems, young flowers and anthers.

The protein resides in the nucleus. Probable transcription factor. Controls central cell differentiation during female gametophyte development. Required for the expression of DEMETER and DD46, but not for the expression of FIS2. Probable transcription factor that may function in the maintenance of the proper function of the central cell in pollen tube attraction. This chain is Agamous-like MADS-box protein AGL80 (AGL80), found in Arabidopsis thaliana (Mouse-ear cress).